A 673-amino-acid chain; its full sequence is Fatty acyl-CoA synthetase B (673 aa).

The signal sequence occupies residues 1 to 18 (MINNWLAVGLLVVSGILA). An N-linked (GlcNAc...) asparagine glycan is attached at Asn267.

The protein belongs to the ATP-dependent AMP-binding enzyme family.

The protein localises to the endoplasmic reticulum. The catalysed reaction is a long-chain fatty acid + ATP + CoA = a long-chain fatty acyl-CoA + AMP + diphosphate. Functionally, long chain fatty acid acyl-CoA synthetases catalyze the formation of a thiester bond between a free fatty acid and coenzyme A during fatty acid metabolic process. The protein is Fatty acyl-CoA synthetase B (fcsB) of Dictyostelium discoideum (Social amoeba).